Consider the following 380-residue polypeptide: UDP-N-acetylglucosamine 2-epimerase (380 aa).

This sequence belongs to the UDP-N-acetylglucosamine 2-epimerase family.

It localises to the cytoplasm. The catalysed reaction is UDP-N-acetyl-alpha-D-glucosamine = UDP-N-acetyl-alpha-D-mannosamine. Its pathway is cell wall biogenesis; poly(glycerol phosphate) teichoic acid biosynthesis. In terms of biological role, catalyzes the conversion of UDP-N-acetylglucosamine into UDP-N-acetylmannosamine, a precursor of the teichoic acid linkage unit. This is UDP-N-acetylglucosamine 2-epimerase (mnaA) from Bacillus subtilis (strain 168).